Consider the following 29-residue polypeptide: Brevinin-2Td (29 aa).

An intrachain disulfide couples Cys23 to Cys29.

The protein belongs to the frog skin active peptide (FSAP) family. Brevinin subfamily. In terms of tissue distribution, expressed by the skin glands.

It localises to the secreted. Antibacterial activity against representative Gram-negative and Gram-positive bacteria. The protein is Brevinin-2Td of Rana temporaria (European common frog).